We begin with the raw amino-acid sequence, 266 residues long: BTB/POZ domain-containing protein KCTD2 (266 aa).

Ala-2 is modified (N-acetylalanine). The tract at residues 38-79 (GRHPADTAASPPPPRTAGARARTSGADGRRRGRPLGPAQRGR) is disordered. The span at 53 to 63 (TAGARARTSGA) shows a compositional bias: low complexity. A BTB domain is found at 76-174 (QRGRYLLRDT…LVKERIRDNE (99 aa)).

The protein is BTB/POZ domain-containing protein KCTD2 (Kctd2) of Mus musculus (Mouse).